We begin with the raw amino-acid sequence, 1391 residues long: DNA-directed RNA polymerase subunit beta' (1391 aa).

Zn(2+) contacts are provided by C72, C74, C87, and C90. D462, D464, and D466 together coordinate Mg(2+). Residues C816, C890, C897, and C900 each contribute to the Zn(2+) site.

This sequence belongs to the RNA polymerase beta' chain family. As to quaternary structure, the RNAP catalytic core consists of 2 alpha, 1 beta, 1 beta' and 1 omega subunit. When a sigma factor is associated with the core the holoenzyme is formed, which can initiate transcription. The cofactor is Mg(2+). Zn(2+) serves as cofactor.

It carries out the reaction RNA(n) + a ribonucleoside 5'-triphosphate = RNA(n+1) + diphosphate. Its function is as follows. DNA-dependent RNA polymerase catalyzes the transcription of DNA into RNA using the four ribonucleoside triphosphates as substrates. The sequence is that of DNA-directed RNA polymerase subunit beta' from Neisseria meningitidis serogroup A / serotype 4A (strain DSM 15465 / Z2491).